We begin with the raw amino-acid sequence, 200 residues long: Matrix protein (200 aa).

As to quaternary structure, homomultimer. Interacts with viral nucleocapsid.

Its subcellular location is the virion membrane. The protein localises to the host endomembrane system. It localises to the host nucleus membrane. Its function is as follows. Plays a major role in assembly and budding of virion, by recruiting cellular partners of the ESCRT complexes that play a key role in releasing the budding particle from the host membrane. Condensates the ribonucleocapsid core during virus assembly. The protein is Matrix protein (M) of Tupaia (TUPV).